Here is a 370-residue protein sequence, read N- to C-terminus: 3-isopropylmalate dehydrogenase (370 aa).

77 to 90 (GPKWDSVPYEVRPE) is an NAD(+) binding site. Substrate-binding residues include Arg97, Arg107, Arg135, and Asp226. Asp226, Asp250, and Asp254 together coordinate Mg(2+). 290-302 (GSAPDIAGKGIAN) is an NAD(+) binding site.

The protein belongs to the isocitrate and isopropylmalate dehydrogenases family. LeuB type 1 subfamily. As to quaternary structure, homodimer. It depends on Mg(2+) as a cofactor. Mn(2+) serves as cofactor.

The protein localises to the cytoplasm. The enzyme catalyses (2R,3S)-3-isopropylmalate + NAD(+) = 4-methyl-2-oxopentanoate + CO2 + NADH. It participates in amino-acid biosynthesis; L-leucine biosynthesis; L-leucine from 3-methyl-2-oxobutanoate: step 3/4. Functionally, catalyzes the oxidation of 3-carboxy-2-hydroxy-4-methylpentanoate (3-isopropylmalate) to 3-carboxy-4-methyl-2-oxopentanoate. The product decarboxylates to 4-methyl-2 oxopentanoate. This is 3-isopropylmalate dehydrogenase from Brucella abortus (strain 2308).